The sequence spans 908 residues: Translation initiation factor IF-2 (908 aa).

2 disordered regions span residues 52–229 and 241–316; these read QSHG…AEEA and AGQY…SAQH. Residues 65–84 show a composition bias toward polar residues; the sequence is KSKTTSTARVTGSSGKSKSV. 6 stretches are compositionally biased toward basic and acidic residues: residues 94-108, 120-138, 176-185, 193-229, 270-280, and 294-303; these read FEKP…ELAA, AAKD…EERQ, IEVKPKEQPK, PKVE…AEEA, SFEKERREIKR, and KNQDEREIKN. The tr-type G domain maps to 409-578; that stretch reads TRPPVVTIMG…SLQAELMELE (170 aa). The interval 418–425 is G1; that stretch reads GHVDHGKT. 418–425 is a GTP binding site; that stretch reads GHVDHGKT. The tract at residues 443–447 is G2; the sequence is GITQH. The tract at residues 464 to 467 is G3; the sequence is DTPG. GTP-binding positions include 464-468 and 518-521; these read DTPGH and NKMD. Residues 518–521 form a G4 region; it reads NKMD. A G5 region spans residues 554 to 556; sequence SAK.

Belongs to the TRAFAC class translation factor GTPase superfamily. Classic translation factor GTPase family. IF-2 subfamily.

It localises to the cytoplasm. One of the essential components for the initiation of protein synthesis. Protects formylmethionyl-tRNA from spontaneous hydrolysis and promotes its binding to the 30S ribosomal subunits. Also involved in the hydrolysis of GTP during the formation of the 70S ribosomal complex. In Psychrobacter arcticus (strain DSM 17307 / VKM B-2377 / 273-4), this protein is Translation initiation factor IF-2.